The primary structure comprises 247 residues: Aliphatic sulfonates import ATP-binding protein SsuB 2 (247 aa).

An ABC transporter domain is found at 28 to 242; it reads VSVRGLQRRY…ALRPILLEEL (215 aa). 60-67 contributes to the ATP binding site; it reads GESGCGKT.

It belongs to the ABC transporter superfamily. Aliphatic sulfonates importer (TC 3.A.1.17.2) family. In terms of assembly, the complex is composed of two ATP-binding proteins (SsuB), two transmembrane proteins (SsuC) and a solute-binding protein (SsuA).

It is found in the cell inner membrane. It catalyses the reaction ATP + H2O + aliphatic sulfonate-[sulfonate-binding protein]Side 1 = ADP + phosphate + aliphatic sulfonateSide 2 + [sulfonate-binding protein]Side 1.. Part of the ABC transporter complex SsuABC involved in aliphatic sulfonates import. Responsible for energy coupling to the transport system. This Paraburkholderia xenovorans (strain LB400) protein is Aliphatic sulfonates import ATP-binding protein SsuB 2.